The primary structure comprises 376 residues: Thymidine kinase (376 aa).

The segment at 1–39 is disordered; sequence MASYPCHQHASAFDQAARSRGHSNRRTALRPRRQQEATE. A compositionally biased stretch (basic residues) spans 19–32; that stretch reads SRGHSNRRTALRPR. Residue 56-63 coordinates ATP; that stretch reads GPHGMGKT. The Proton acceptor role is filled by glutamate 83. The substrate site is built by tyrosine 101 and glutamine 125. Arginine 216 provides a ligand contact to ATP. Arginine 222 provides a ligand contact to substrate. The disordered stretch occupies residues 260–280; it reads GQLSGTAVPPQGAEPQSNAGP.

This sequence belongs to the herpesviridae thymidine kinase family. Homodimer.

The catalysed reaction is thymidine + ATP = dTMP + ADP + H(+). Catalyzes the transfer of the gamma-phospho group of ATP to thymidine to generate dTMP in the salvage pathway of pyrimidine synthesis. The dTMP serves as a substrate for DNA polymerase during viral DNA replication. Allows the virus to be reactivated and to grow in non-proliferative cells lacking a high concentration of phosphorylated nucleic acid precursors. This is Thymidine kinase from Homo sapiens (Human).